Here is a 517-residue protein sequence, read N- to C-terminus: Nicotine N-demethylase CYP82E4 (517 aa).

The chain crosses the membrane as a helical span at residues 2–22 (LSPIEAIVGLVTFTFLFYFLW). Residue K254 forms a Glycyl lysine isopeptide (Lys-Gly) (interchain with G-Cter in ubiquitin) linkage. Residue C457 coordinates heme.

It belongs to the cytochrome P450 family. CYP82E2 subfamily. Heme is required as a cofactor. In terms of tissue distribution, expressed in leaves.

It is found in the membrane. The catalysed reaction is (S)-nicotine + reduced [NADPH--hemoprotein reductase] + O2 = (S)-nornicotine + formaldehyde + oxidized [NADPH--hemoprotein reductase] + H2O + H(+). The protein operates within alkaloid biosynthesis; nicotine biosynthesis. Involved in the biosynthesis of pyridine alkaloid natural products, leading mainly to the production of anabasine, anatabine, nicotine and nornicotine, effective deterrents against herbivores with antiparasitic and pesticide properties (neurotoxins); nornicotine serves as the precursor in the synthesis of the carcinogen compound N'-nitrosonornicotine (NNN). Catalyzes the demethylation of nicotine to form nornicotine. The polypeptide is Nicotine N-demethylase CYP82E4 (Nicotiana tomentosiformis (Tobacco)).